We begin with the raw amino-acid sequence, 1193 residues long: Chloride channel protein 2 (1193 aa).

The Cytoplasmic portion of the chain corresponds to 1 to 168 (MVYFGDRQRD…WIWRHTVARL (168 aa)). The tract at residues 76–97 (SHAFYPCPPPAENARDSDSSDD) is disordered. Helical transmembrane passes span 169 to 204 (GEDWVFLALLGIIMALLSFIMDKGISICTNARIWLY) and 213 to 236 (VQYIAWVSLPVCLILFSAGFVHLI). Positions 242–246 (GSGIP) match the Selectivity filter part_1 motif. Serine 243 is a binding site for chloride. Residues 245 to 252 (IPEMKTIL) constitute an intramembrane region (helical). 2 helical membrane passes run 261-279 (LTFKTLVAKVIGLTATLGS) and 286-304 (EGPFVHIASIVAQLLSKLV). Positions 284 to 288 (GKEGP) match the Selectivity filter part_2 motif. 2 intramembrane regions (helical) span residues 320 to 332 (MLAAACAVGVGAC) and 336 to 344 (PVGGVLFSI). 5 helical membrane-spanning segments follow: residues 356 to 373 (YWRGFFAAVCGATVFRLL), 402 to 430 (LFVFALIGLVCGLGGASYVWVHRRYVLFM), 439 to 458 (FLQKNRFLYPGFLALLVSSI), 511 to 530 (FGNLVIYTLFTFVVSIIAST), and 536 to 555 (GMFIPVFKIGAGFGRLVGEF). Residues 536-540 (GMFIP) carry the Selectivity filter part_3 motif. A chloride-binding site is contributed by phenylalanine 538. An intramembrane region (helical) is located at residues 576–590 (GGYAVVGAAAFSGSV). The segment at residues 591–592 (TH) is an intramembrane region (note=Loop between two helices). The segment at residues 593–604 (TVSVAVIIFEMT) is an intramembrane region (helical). The note=Loop between two helices intramembrane region spans 605-609 (GQITH). The helical transmembrane segment at 610–626 (VVPVMIAVLVANAVAAL) threads the bilayer. Residues 627–1193 (LQPSIYDSII…KSNTENGNHA (567 aa)) lie on the Cytoplasmic side of the membrane. Residue tyrosine 632 participates in chloride binding. In terms of domain architecture, CBS 1 spans 663 to 723 (MVRDVKYIWH…KMIEKHIGRE (61 aa)). Disordered regions lie at residues 848–884 (TLQDVQPDPETGSLSPAASNHEVEVPRTPSTPGVSKK), 1103–1122 (NSFVPPTRDEDADEKPAVEK), and 1159–1193 (IKHTDKGTVSLTMPPQESKQSPSADKSNTENGNHA). A CBS 2 domain is found at 1048 to 1105 (IDPSPFQLVERTSILKVHSLFSMVGINHAYVTKIGRLVGVVGLKELRKAIEDINSNSF). Residues 1165–1193 (GTVSLTMPPQESKQSPSADKSNTENGNHA) are compositionally biased toward polar residues.

It belongs to the chloride channel (TC 2.A.49) family. At embryonic stages 13-16, expressed in a subset of the midline cells of the midline primordium and in all of the midline glia. Expressed along the Z-line of the sarcomere in larval longitudinal muscles.

The protein resides in the membrane. Functionally, voltage-gated chloride channel. Chloride channels have several functions including the regulation of cell volume; membrane potential stabilization, signal transduction and transepithelial transport. This Drosophila melanogaster (Fruit fly) protein is Chloride channel protein 2 (ClC-a).